A 254-amino-acid polypeptide reads, in one-letter code: Ribosomal RNA small subunit methyltransferase J (254 aa).

S-adenosyl-L-methionine contacts are provided by residues R101 to D102, E117 to R118, S153 to S154, and D171.

The protein belongs to the methyltransferase superfamily. RsmJ family.

The protein localises to the cytoplasm. It catalyses the reaction guanosine(1516) in 16S rRNA + S-adenosyl-L-methionine = N(2)-methylguanosine(1516) in 16S rRNA + S-adenosyl-L-homocysteine + H(+). In terms of biological role, specifically methylates the guanosine in position 1516 of 16S rRNA. This Enterobacter sp. (strain 638) protein is Ribosomal RNA small subunit methyltransferase J.